Here is a 131-residue protein sequence, read N- to C-terminus: Small ribosomal subunit protein eS8 (131 aa).

The segment at 1–37 (MKLGAFYKGGDLKKPSGGKKRRVRRTKKKALGGGPPQ) is disordered. A compositionally biased stretch (basic residues) spans 16–30 (SGGKKRRVRRTKKKA).

It belongs to the eukaryotic ribosomal protein eS8 family. As to quaternary structure, part of the 30S ribosomal subunit.

The sequence is that of Small ribosomal subunit protein eS8 from Pyrobaculum neutrophilum (strain DSM 2338 / JCM 9278 / NBRC 100436 / V24Sta) (Thermoproteus neutrophilus).